The chain runs to 230 residues: Response regulator MprA (230 aa).

The Response regulatory domain maps to 4 to 118 (RILVVDDDRA…ELLARMRALL (115 aa)). D48 is subject to 4-aspartylphosphate. Residues 129–227 (SMAMRFSDLT…VRGVGYVLRE (99 aa)) constitute a DNA-binding region (ompR/PhoB-type).

Post-translationally, phosphorylated and dephosphorylated by MprB.

Its subcellular location is the cytoplasm. Member of the two-component regulatory system MprB/MprA which contributes to maintaining a balance among several systems involved in stress resistance and is required for establishment and maintenance of persistent infection in the host. Functions as a transcriptional regulator that recognizes a 19-bp nucleotide motif comprizing two loosely conserved 8-bp direct DNA-binding motif repeats separated by a 3-bp spacer region. The protein is Response regulator MprA (mprA) of Mycobacterium tuberculosis (strain ATCC 25177 / H37Ra).